The sequence spans 401 residues: Multidrug resistance protein MdtH (401 aa).

11 helical membrane passes run 13–33 (YFLL…FPLI), 34–54 (SIHF…ALGL), 78–95 (MIVT…FIAL), 99–116 (PWIL…GTLF), 139–159 (LLLM…SWLL), 165–185 (FVCW…ALFL), 214–234 (VLTL…FPII), 243–263 (AAVK…LYPI), 289–309 (FPVG…LFYL), 340–360 (LGLA…YDTG), and 365–385 (IPQL…YALH).

It belongs to the major facilitator superfamily. DHA1 family. MdtH (TC 2.A.1.2.21) subfamily.

The protein localises to the cell inner membrane. This Photorhabdus laumondii subsp. laumondii (strain DSM 15139 / CIP 105565 / TT01) (Photorhabdus luminescens subsp. laumondii) protein is Multidrug resistance protein MdtH.